Consider the following 570-residue polypeptide: Sulfite reductase [NADPH] hemoprotein beta-component (570 aa).

The [4Fe-4S] cluster site is built by cysteine 434, cysteine 440, cysteine 479, and cysteine 483. A siroheme-binding site is contributed by cysteine 483.

Belongs to the nitrite and sulfite reductase 4Fe-4S domain family. As to quaternary structure, alpha(8)-beta(8). The alpha component is a flavoprotein, the beta component is a hemoprotein. It depends on siroheme as a cofactor. [4Fe-4S] cluster serves as cofactor.

It carries out the reaction hydrogen sulfide + 3 NADP(+) + 3 H2O = sulfite + 3 NADPH + 4 H(+). It functions in the pathway sulfur metabolism; hydrogen sulfide biosynthesis; hydrogen sulfide from sulfite (NADPH route): step 1/1. Its function is as follows. Component of the sulfite reductase complex that catalyzes the 6-electron reduction of sulfite to sulfide. This is one of several activities required for the biosynthesis of L-cysteine from sulfate. The polypeptide is Sulfite reductase [NADPH] hemoprotein beta-component (Salmonella typhi).